The sequence spans 192 residues: Anthranilate synthase component 2 (192 aa).

The Glutamine amidotransferase type-1 domain occupies 3 to 192 (NILLLDNIDS…LQRVIQWTKI (190 aa)). 57 to 59 (GPG) is an L-glutamine binding site. The active-site Nucleophile; for GATase activity is the C84. Residues Q88 and 134–135 (SL) contribute to the L-glutamine site. Active-site for GATase activity residues include H170 and E172.

Heterotetramer consisting of two non-identical subunits: a beta subunit (TrpG) and a large alpha subunit (TrpE).

It carries out the reaction chorismate + L-glutamine = anthranilate + pyruvate + L-glutamate + H(+). It participates in amino-acid biosynthesis; L-tryptophan biosynthesis; L-tryptophan from chorismate: step 1/5. Part of a heterotetrameric complex that catalyzes the two-step biosynthesis of anthranilate, an intermediate in the biosynthesis of L-tryptophan. In the first step, the glutamine-binding beta subunit (TrpG) of anthranilate synthase (AS) provides the glutamine amidotransferase activity which generates ammonia as a substrate that, along with chorismate, is used in the second step, catalyzed by the large alpha subunit of AS (TrpE) to produce anthranilate. In the absence of TrpG, TrpE can synthesize anthranilate directly from chorismate and high concentrations of ammonia. The protein is Anthranilate synthase component 2 (trpG) of Buchnera aphidicola subsp. Baizongia pistaciae (strain Bp).